The sequence spans 323 residues: Ribosomal RNA small subunit methyltransferase H (323 aa).

Residues 44-46, aspartate 64, tyrosine 91, aspartate 112, and glutamine 119 contribute to the S-adenosyl-L-methionine site; that span reads AGH.

It belongs to the methyltransferase superfamily. RsmH family.

It is found in the cytoplasm. The catalysed reaction is cytidine(1402) in 16S rRNA + S-adenosyl-L-methionine = N(4)-methylcytidine(1402) in 16S rRNA + S-adenosyl-L-homocysteine + H(+). In terms of biological role, specifically methylates the N4 position of cytidine in position 1402 (C1402) of 16S rRNA. This chain is Ribosomal RNA small subunit methyltransferase H, found in Nitratidesulfovibrio vulgaris (strain ATCC 29579 / DSM 644 / CCUG 34227 / NCIMB 8303 / VKM B-1760 / Hildenborough) (Desulfovibrio vulgaris).